The primary structure comprises 346 residues: Structure-specific endonuclease subunit SLX1 (346 aa).

Positions 10 to 92 (ALYCVYILRS…TNPHTSLHIP (83 aa)) constitute a GIY-YIG domain. The segment at 238-296 (CVVCKEEIDPEEGGLHAVCSNEGCEGVGHLRCWGRYLLKSEEGGGEGAILPVGGRCPRC) adopts an SLX1-type zinc-finger fold. The segment covering 324-336 (KVKRKRAPRKKTA) has biased composition (basic residues). Residues 324–346 (KVKRKRAPRKKTAKTKETREEDG) form a disordered region. Residues 337-346 (KTKETREEDG) show a composition bias toward basic and acidic residues.

Belongs to the SLX1 family. In terms of assembly, forms a heterodimer with SLX4. A divalent metal cation serves as cofactor.

The protein resides in the nucleus. Functionally, catalytic subunit of the SLX1-SLX4 structure-specific endonuclease that resolves DNA secondary structures generated during DNA repair and recombination. Has endonuclease activity towards branched DNA substrates, introducing single-strand cuts in duplex DNA close to junctions with ss-DNA. In Podospora anserina (strain S / ATCC MYA-4624 / DSM 980 / FGSC 10383) (Pleurage anserina), this protein is Structure-specific endonuclease subunit SLX1.